A 380-amino-acid chain; its full sequence is Glutamyl-tRNA reductase 1 (380 aa).

Substrate contacts are provided by residues 42-45 (TCNR), serine 93, 98-100 (ETD), and glutamine 104. The active-site Nucleophile is cysteine 43. Residue 172 to 177 (GAGAVG) coordinates NADP(+).

The protein belongs to the glutamyl-tRNA reductase family. Homodimer.

The catalysed reaction is (S)-4-amino-5-oxopentanoate + tRNA(Glu) + NADP(+) = L-glutamyl-tRNA(Glu) + NADPH + H(+). Its pathway is porphyrin-containing compound metabolism; protoporphyrin-IX biosynthesis; 5-aminolevulinate from L-glutamyl-tRNA(Glu): step 1/2. Functionally, catalyzes the NADPH-dependent reduction of glutamyl-tRNA(Glu) to glutamate 1-semialdehyde (GSA). This is Glutamyl-tRNA reductase 1 from Pyrobaculum calidifontis (strain DSM 21063 / JCM 11548 / VA1).